We begin with the raw amino-acid sequence, 131 residues long: Snaclec macrovipecetin subunit alpha (131 aa).

3 disulfides stabilise this stretch: C2-C13, C30-C125, and C100-C117. The C-type lectin domain maps to 9–126; the sequence is HEEHCYKVFR…CEDKNPFICK (118 aa).

As to quaternary structure, heterodimer of subunits alpha and beta; disulfide-linked. In terms of tissue distribution, expressed by the venom gland.

The protein localises to the secreted. Interferes with one step of hemostasis (modulation of platelet aggregation, or coagulation cascade, for example). The protein is Snaclec macrovipecetin subunit alpha of Macrovipera lebetinus (Levantine viper).